The chain runs to 61 residues: MAKTSKIVQSQRASKFKVQHHNRCSRCGRPRGYINRFGLCRICFRELALQGQIPGVRKSSW.

Residues C24, C27, C40, and C43 each contribute to the Zn(2+) site.

It belongs to the universal ribosomal protein uS14 family. Zinc-binding uS14 subfamily. As to quaternary structure, part of the 30S ribosomal subunit. Contacts proteins S3 and S10. The cofactor is Zn(2+).

Binds 16S rRNA, required for the assembly of 30S particles and may also be responsible for determining the conformation of the 16S rRNA at the A site. The chain is Small ribosomal subunit protein uS14 from Dehalococcoides mccartyi (strain ATCC BAA-2266 / KCTC 15142 / 195) (Dehalococcoides ethenogenes (strain 195)).